A 163-amino-acid polypeptide reads, in one-letter code: Odorant-binding protein 1a (163 aa).

A signal peptide spans 1-16; the sequence is MAKFLLLALTFGLAHA. 2 disulfide bridges follow: Cys-50–Cys-54 and Cys-69–Cys-161.

It belongs to the calycin superfamily. Lipocalin family. As to quaternary structure, may form a heterodimer with OBP1B. In terms of processing, the N-terminus may be blocked. As to expression, expressed in nasal mucosa (at protein level). Specifically detected in septal and lateral nasal glands.

It is found in the secreted. In terms of biological role, binds the chemical odorant 2-isobutyl-3-methoxypyrazine. In Mus musculus (Mouse), this protein is Odorant-binding protein 1a.